We begin with the raw amino-acid sequence, 559 residues long: MAAAKKAVLGPLVGAVDQGTSSTRFLVFNSKTAELLSHHQVEIKQEFPREGWVEQDPKEILQSVYECIEKTCEKLGQLNIDISNIKAIGVSNQRETTVVWDKLTGEPLYNAVVWLDLRTQSTVEKLSKRIPGNNNFVKSKTGLPLSTYFSAVKLRWLLDNVKKVQEAVEENRALFGTIDSWLIWSLTGGINGGVHCTDVTNASRTMLFNIHSLEWDKELCEFFGIPMEILPNVRSSSEIYGLMKISHSLKAGALEGVPISGCLGDQSAALVGQMCFQDGQAKNTYGTGCFLLCNTGHKCVFSEHGLLTTVAYKLGRDKPVYYALEGSVAIAGAVIRWLRDNLGIIKSSEEIEKLAKEVGTSYGCYFVPAFSGLYAPYWEPSARGIICGLTQFTNKCHIAFAALEAVCFQTREILDAMNRDCGIPLSHLQVDGGMTSNKILMQLQADILYIPVVKPSMPETTALGAAMAAGAAEGVGVWSLEPEDLSAVTMERFEPQINAEESEIRYSTWKKAVMKSIGWVTTQSPESGDPSIFCSLPLGFFIVSSMVMLIGARYISGIP.

Thr-20 lines the ADP pocket. Residues Thr-20, Ser-21, and Ser-22 each coordinate ATP. Thr-20 is a sn-glycerol 3-phosphate binding site. ADP is bound at residue Arg-24. Sn-glycerol 3-phosphate contacts are provided by Arg-94, Glu-95, and Tyr-148. Residues Arg-94, Glu-95, and Tyr-148 each contribute to the glycerol site. Gly-252 is a beta-D-fructose 1,6-bisphosphate binding site. Asp-265 contacts sn-glycerol 3-phosphate. Positions 265 and 266 each coordinate glycerol. ADP is bound by residues Thr-287, Gly-332, Gly-433, and Asn-437. The ATP site is built by Thr-287, Gly-332, and Gly-433. Residue Glu-501 coordinates Zn(2+). A helical membrane pass occupies residues 532–552 (IFCSLPLGFFIVSSMVMLIGA).

Belongs to the FGGY kinase family.

It localises to the mitochondrion outer membrane. The protein resides in the nucleus. Its subcellular location is the cytoplasm. The protein localises to the cytosol. It catalyses the reaction glycerol + ATP = sn-glycerol 3-phosphate + ADP + H(+). It participates in polyol metabolism; glycerol degradation via glycerol kinase pathway; sn-glycerol 3-phosphate from glycerol: step 1/1. Its function is as follows. Kinase that plays a key role in glycerol metabolism, catalyzing its phosphorylation to produce sn-glycerol 3-phosphate. Sn-glycerol 3-phosphate is a crucial intermediate in various metabolic pathways, such as the synthesis of glycerolipids and triglycerides, glycogenesis, glycolysis and gluconeogenesis. This is Glycerol kinase from Rattus norvegicus (Rat).